A 335-amino-acid chain; its full sequence is Cytochrome c biogenesis protein CcsA (335 aa).

8 consecutive transmembrane segments (helical) span residues 15–35, 36–56, 68–88, 97–117, 142–162, 243–263, 278–298, and 304–324; these read FLLL…PNVT, WLPT…ATLL, LSNL…IHLV, LVGV…ALSL, VMML…AFLV, IIGL…VWAN, WALI…TKGW, and AILA…VNLL.

It belongs to the CcmF/CycK/Ccl1/NrfE/CcsA family. In terms of assembly, may interact with ccs1.

The protein localises to the cellular thylakoid membrane. Required during biogenesis of c-type cytochromes (cytochrome c6 and cytochrome f) at the step of heme attachment. The sequence is that of Cytochrome c biogenesis protein CcsA from Crocosphaera subtropica (strain ATCC 51142 / BH68) (Cyanothece sp. (strain ATCC 51142)).